Reading from the N-terminus, the 92-residue chain is Small ribosomal subunit protein uS19 (92 aa).

Functionally, protein S19 forms a complex with S13 that binds strongly to the 16S ribosomal RNA. The polypeptide is Small ribosomal subunit protein uS19 (Rhodopseudomonas palustris (strain ATCC BAA-98 / CGA009)).